We begin with the raw amino-acid sequence, 312 residues long: Glyoxylate/hydroxypyruvate reductase A (312 aa).

Arginine 227 is a catalytic residue. Catalysis depends on histidine 275, which acts as the Proton donor.

This sequence belongs to the D-isomer specific 2-hydroxyacid dehydrogenase family. GhrA subfamily.

It is found in the cytoplasm. It catalyses the reaction glycolate + NADP(+) = glyoxylate + NADPH + H(+). The enzyme catalyses (R)-glycerate + NAD(+) = 3-hydroxypyruvate + NADH + H(+). It carries out the reaction (R)-glycerate + NADP(+) = 3-hydroxypyruvate + NADPH + H(+). Its function is as follows. Catalyzes the NADPH-dependent reduction of glyoxylate and hydroxypyruvate into glycolate and glycerate, respectively. In Shigella boydii serotype 18 (strain CDC 3083-94 / BS512), this protein is Glyoxylate/hydroxypyruvate reductase A.